Reading from the N-terminus, the 508-residue chain is Photosystem II CP47 reaction center protein (508 aa).

Helical transmembrane passes span 21 to 36 (SVHI…WAGS), 101 to 115 (IVFS…IWHW), 140 to 156 (GIHL…FGAF), 203 to 218 (IAAG…FHLS), 237 to 252 (VLSS…AFVV), and 457 to 472 (SFAL…HGAR).

The protein belongs to the PsbB/PsbC family. PsbB subfamily. In terms of assembly, PSII is composed of 1 copy each of membrane proteins PsbA, PsbB, PsbC, PsbD, PsbE, PsbF, PsbH, PsbI, PsbJ, PsbK, PsbL, PsbM, PsbT, PsbX, PsbY, PsbZ, Psb30/Ycf12, at least 3 peripheral proteins of the oxygen-evolving complex and a large number of cofactors. It forms dimeric complexes. Requires Binds multiple chlorophylls. PSII binds additional chlorophylls, carotenoids and specific lipids. as cofactor.

It localises to the plastid. Its subcellular location is the chloroplast thylakoid membrane. Functionally, one of the components of the core complex of photosystem II (PSII). It binds chlorophyll and helps catalyze the primary light-induced photochemical processes of PSII. PSII is a light-driven water:plastoquinone oxidoreductase, using light energy to abstract electrons from H(2)O, generating O(2) and a proton gradient subsequently used for ATP formation. The protein is Photosystem II CP47 reaction center protein of Panax ginseng (Korean ginseng).